The sequence spans 321 residues: Phosphatidate cytidylyltransferase, mitochondrial (321 aa).

The protein belongs to the TAM41 family. Mg(2+) serves as cofactor. Requires Co(2+) as cofactor. Cu(2+) is required as a cofactor.

Its subcellular location is the mitochondrion inner membrane. It carries out the reaction a 1,2-diacyl-sn-glycero-3-phosphate + CTP + H(+) = a CDP-1,2-diacyl-sn-glycerol + diphosphate. It functions in the pathway phospholipid metabolism; CDP-diacylglycerol biosynthesis; CDP-diacylglycerol from sn-glycerol 3-phosphate: step 3/3. In terms of biological role, catalyzes the formation of CDP-diacylglycerol (CDP-DAG) from phosphatidic acid (PA) in the mitochondrial inner membrane. Required for the biosynthesis of the dimeric phospholipid cardiolipin, which stabilizes supercomplexes of the mitochondrial respiratory chain in the mitochondrial inner membrane. The polypeptide is Phosphatidate cytidylyltransferase, mitochondrial (Caenorhabditis briggsae).